Reading from the N-terminus, the 278-residue chain is S-formylglutathione hydrolase YeiG (278 aa).

Active-site charge relay system residues include Ser145, Asp223, and His256.

This sequence belongs to the esterase D family.

It catalyses the reaction S-formylglutathione + H2O = formate + glutathione + H(+). In terms of biological role, serine hydrolase involved in the detoxification of formaldehyde. Hydrolyzes S-formylglutathione to glutathione and formate. The chain is S-formylglutathione hydrolase YeiG (yeiG) from Escherichia coli O6:K15:H31 (strain 536 / UPEC).